The chain runs to 677 residues: MLGSLVSKRTAPAPRLLLQLLRSPSLRSHESATGQSVTTGGRGEPQWLRAAVGGRHGTSPALLTGGGAATGGRQRGRTETPCLAAATWGRLPSPEDTLPGQDSWNGVLSRAGLGVWALATALVVHCYSKSPSSKDAALMEAARANNVQEVSRLLSEGADVNARHRLGWTALMVAAINRNDSVVQVLLAAGADPNLGDDFSSVYKTAKDQGIHSLEVLVTREDDFNNRLNNRASFKGCTALHYAVLADDYRTVKELLDGGANPLQRNEMGHTPLDYAREGEVMKLLRTSETKYQEKQRKREAEERRRFPLEQRLKEHIIGQESAIATVGAAIRRKENGWYDEEHPLVFLFLGSSGIGKTELAKQTAKYMHKDAKKGFIRLDMSEFQERHEVAKFIGSPPGYIGHEEGGQLTKKLKQCPNAVVLFDEVDKAHPDVLTIMLQLFDEGRLTDGKGKTIDCKDAIFIMTSNVASDEIAQHALQLRQEALEMSRNRIAENLGDVQISDKITISKNFKENVIRPILKAHFRRDEFLGRINEIVYFLPFCHSELIQLVNKELNFWAKRAKQRHNITLLWDREVADVLVEGYNVHYGARSIKHEVERRVVNQLAAAYEQDLLPGGCTLRITVEDSDKQLLRSPELSSSQAERRPPKLRLEIIDKDSKTHKLDIQAPLHPEKVCHTL.

The transit peptide at 1–28 directs the protein to the mitochondrion; the sequence is MLGSLVSKRTAPAPRLLLQLLRSPSLRS. The segment at 92 to 126 is autoinhibitory; it reads PSPEDTLPGQDSWNGVLSRAGLGVWALATALVVHC. ANK repeat units follow at residues 133–162, 166–195, 235–265, and 268–297; these read SKDA…DVNA, LGWT…DPNL, KGCT…PLQR, and MGHT…EKQR. ATP is bound by residues histidine 316, isoleucine 318, serine 353, glycine 354, isoleucine 355, glycine 356, lysine 357, threonine 358, glutamate 425, and asparagine 466. The segment at 477 to 505 is regulatory; slows ATPase and disaggregase activities; that stretch reads LQLRQEALEMSRNRIAENLGDVQISDKIT. Arginine 531 provides a ligand contact to ATP. Lysine 559 is subject to N6-acetyllysine. Residue arginine 590 participates in ATP binding.

The protein belongs to the ClpA/ClpB family. As to quaternary structure, homododecamer when substrate-bound; the homododecamer consists of 2 homohexamers stacked head-to-head via ANK repeat-mediated interactions. The active substrate-bound form is likely to exist in a dynamic equilibrium between homohexamers and homododecamers. Homotetradecamer in the unbound state which is remodeled upon substrate binding into the homododecamer. Interacts with PHB and PHB2. Interacts with MAVS; the interaction is enhanced by Sendai virus infection. Proteolytically cleaved by protease PARL. ATP-dependent protein disaggregase activity is stimulated by PARL-mediated cleavage of the N-terminal autoinhibitory peptide.

Its subcellular location is the mitochondrion intermembrane space. The catalysed reaction is ATP + H2O = ADP + phosphate + H(+). Disaggregase activity is inhibited by ADP. Functions as a regulatory ATPase and participates in secretion/protein trafficking process. Has ATP-dependent protein disaggregase activity and is required to maintain the solubility of key mitochondrial proteins. Involved in mitochondrial-mediated antiviral innate immunity, activates RIG-I-mediated signal transduction and production of IFNB1 and pro-inflammatory cytokine IL6. Plays a role in granulocyte differentiation. In Bos taurus (Bovine), this protein is Mitochondrial disaggregase.